A 347-amino-acid polypeptide reads, in one-letter code: Geranylgeranyl pyrophosphate synthase 7, chloroplastic (347 aa).

The N-terminal 39 residues, Met-1–Leu-39, are a transit peptide targeting the chloroplast. Lys-95, Arg-98, and His-127 together coordinate isopentenyl diphosphate. Positions 134 and 140 each coordinate Mg(2+). Arg-145 lines the dimethylallyl diphosphate pocket. Isopentenyl diphosphate is bound at residue Arg-146. Positions 232, 233, 270, 287, and 297 each coordinate dimethylallyl diphosphate.

This sequence belongs to the FPP/GGPP synthase family. As to quaternary structure, monomer. Mg(2+) is required as a cofactor.

Its subcellular location is the plastid. It is found in the chloroplast. It catalyses the reaction isopentenyl diphosphate + dimethylallyl diphosphate = (2E)-geranyl diphosphate + diphosphate. The enzyme catalyses isopentenyl diphosphate + (2E)-geranyl diphosphate = (2E,6E)-farnesyl diphosphate + diphosphate. It carries out the reaction isopentenyl diphosphate + (2E,6E)-farnesyl diphosphate = (2E,6E,10E)-geranylgeranyl diphosphate + diphosphate. The protein operates within isoprenoid biosynthesis; farnesyl diphosphate biosynthesis; farnesyl diphosphate from geranyl diphosphate and isopentenyl diphosphate: step 1/1. It participates in isoprenoid biosynthesis; geranyl diphosphate biosynthesis; geranyl diphosphate from dimethylallyl diphosphate and isopentenyl diphosphate: step 1/1. It functions in the pathway isoprenoid biosynthesis; geranylgeranyl diphosphate biosynthesis; geranylgeranyl diphosphate from farnesyl diphosphate and isopentenyl diphosphate: step 1/1. In terms of biological role, catalyzes the trans-addition of the three molecules of IPP onto DMAPP to form geranylgeranyl pyrophosphate. This is Geranylgeranyl pyrophosphate synthase 7, chloroplastic from Arabidopsis thaliana (Mouse-ear cress).